The chain runs to 848 residues: F-BAR domain only protein 2 (848 aa).

An F-BAR domain is found at 4-250 (PYFLENFWGN…NMENTSVESL (247 aa)). Positions 87-114 (HMELVRKLQELIKEVQKYVDEQAKNHKK) form a coiled coil. Disordered stretches follow at residues 292 to 316 (IPGR…NASN) and 404 to 526 (LSPT…RAES). Phosphoserine is present on residues Ser-405 and Ser-417. Low complexity predominate over residues 445–460 (PFGPTSTGSSSSLPQS). The MHD domain maps to 580–848 (ALPIAVAFTE…FATGRYMADC (269 aa)).

Belongs to the FCHO family. As to quaternary structure, homodimer.

It is found in the membrane. The protein resides in the clathrin-coated pit. Functionally, may function in an early step of clathrin-mediated endocytosis. The sequence is that of F-BAR domain only protein 2 (fcho2) from Danio rerio (Zebrafish).